Consider the following 204-residue polypeptide: Glycerol-3-phosphate acyltransferase (204 aa).

Transmembrane regions (helical) follow at residues 8 to 28, 53 to 73, 81 to 101, 116 to 136, and 155 to 175; these read ILIFAYLLGSINSAIIVCYIF, VPAAITLIFDILKGLVPVVIA, FITACTALYAILGHIFPIFFG, FGFSWILGLIFVITWLCVAII, and VIFTSDLQVAAPFLIIAIIIL.

It belongs to the PlsY family. As to quaternary structure, probably interacts with PlsX.

The protein resides in the cell inner membrane. It carries out the reaction an acyl phosphate + sn-glycerol 3-phosphate = a 1-acyl-sn-glycero-3-phosphate + phosphate. It participates in lipid metabolism; phospholipid metabolism. Catalyzes the transfer of an acyl group from acyl-phosphate (acyl-PO(4)) to glycerol-3-phosphate (G3P) to form lysophosphatidic acid (LPA). This enzyme utilizes acyl-phosphate as fatty acyl donor, but not acyl-CoA or acyl-ACP. This Francisella tularensis subsp. tularensis (strain FSC 198) protein is Glycerol-3-phosphate acyltransferase.